The primary structure comprises 165 residues: MRVALFPGSFDPVTWGHIDLVKRASLIFDKVIVLVANNSAKNYLLSDVERYELTFEVIASLGWSKIFVDRYDGIILDYALKNDIGFIVRGVRAFHDFEFEFERYVVNNKLSPLVDTIFLPSSDRYLFVRSDLVKELIKNKNFDLSSFIPELVQKKLKSKFIDKLS.

Ser9 contributes to the substrate binding site. Residues 9–10 and His17 contribute to the ATP site; that span reads SF. Positions 41, 75, and 89 each coordinate substrate. ATP contacts are provided by residues 90–92, Glu100, and 125–131; these read GVR and YLFVRSD.

It belongs to the bacterial CoaD family. In terms of assembly, homohexamer. The cofactor is Mg(2+).

The protein localises to the cytoplasm. It catalyses the reaction (R)-4'-phosphopantetheine + ATP + H(+) = 3'-dephospho-CoA + diphosphate. It functions in the pathway cofactor biosynthesis; coenzyme A biosynthesis; CoA from (R)-pantothenate: step 4/5. Its function is as follows. Reversibly transfers an adenylyl group from ATP to 4'-phosphopantetheine, yielding dephospho-CoA (dPCoA) and pyrophosphate. This Borrelia hermsii (strain HS1 / DAH) protein is Phosphopantetheine adenylyltransferase.